The primary structure comprises 407 residues: Probable tRNA sulfurtransferase (407 aa).

Residues 61 to 165 (NEITYRLSKI…LDAIYMYEEV (105 aa)) form the THUMP domain. ATP contacts are provided by residues 183–184 (ML), 208–209 (HF), Arg265, Gly287, and Gln296.

It belongs to the ThiI family.

The protein localises to the cytoplasm. It carries out the reaction [ThiI sulfur-carrier protein]-S-sulfanyl-L-cysteine + a uridine in tRNA + 2 reduced [2Fe-2S]-[ferredoxin] + ATP + H(+) = [ThiI sulfur-carrier protein]-L-cysteine + a 4-thiouridine in tRNA + 2 oxidized [2Fe-2S]-[ferredoxin] + AMP + diphosphate. It catalyses the reaction [ThiS sulfur-carrier protein]-C-terminal Gly-Gly-AMP + S-sulfanyl-L-cysteinyl-[cysteine desulfurase] + AH2 = [ThiS sulfur-carrier protein]-C-terminal-Gly-aminoethanethioate + L-cysteinyl-[cysteine desulfurase] + A + AMP + 2 H(+). It functions in the pathway cofactor biosynthesis; thiamine diphosphate biosynthesis. Functionally, catalyzes the ATP-dependent transfer of a sulfur to tRNA to produce 4-thiouridine in position 8 of tRNAs, which functions as a near-UV photosensor. Also catalyzes the transfer of sulfur to the sulfur carrier protein ThiS, forming ThiS-thiocarboxylate. This is a step in the synthesis of thiazole, in the thiamine biosynthesis pathway. The sulfur is donated as persulfide by IscS. The protein is Probable tRNA sulfurtransferase of Staphylococcus aureus (strain N315).